We begin with the raw amino-acid sequence, 88 residues long: Small ribosomal subunit protein bS20 (88 aa).

Disordered regions lie at residues 1–29 (MANT…SKLR) and 69–88 (KNTA…AMAA).

It belongs to the bacterial ribosomal protein bS20 family.

Binds directly to 16S ribosomal RNA. The sequence is that of Small ribosomal subunit protein bS20 from Polynucleobacter asymbioticus (strain DSM 18221 / CIP 109841 / QLW-P1DMWA-1) (Polynucleobacter necessarius subsp. asymbioticus).